We begin with the raw amino-acid sequence, 156 residues long: Small ribosomal subunit protein uS7 (156 aa).

Belongs to the universal ribosomal protein uS7 family. As to quaternary structure, part of the 30S ribosomal subunit. Contacts proteins S9 and S11.

In terms of biological role, one of the primary rRNA binding proteins, it binds directly to 16S rRNA where it nucleates assembly of the head domain of the 30S subunit. Is located at the subunit interface close to the decoding center, probably blocks exit of the E-site tRNA. This Nocardioides sp. (strain ATCC BAA-499 / JS614) protein is Small ribosomal subunit protein uS7.